The sequence spans 578 residues: Acyl-CoA synthetase ACTT5 (578 aa).

Position 211-222 (211-222 (RLTTSGTTGLPK)) interacts with AMP. An AMP-binding region spans residues 472-551 (ELEAALLQAK…DEIPRSPTGK (80 aa)).

This sequence belongs to the ATP-dependent AMP-binding enzyme family.

The protein operates within mycotoxin biosynthesis. Acyl-CoA synthetase; part of the gene clusters that mediate the biosynthesis of the host-selective toxins (HSTs) ACT-toxins responsible for brown spot of tangerine disease by the tangerine pathotype which affects tangerines and mandarins. ACT-toxins consist of three moieties, 9,10-epoxy-8-hydroxy-9-methyl-decatrienoic acid (EDA), valine and a polyketide. ACT-toxin I is toxic to both citrus and pear; toxin II the 5''-deoxy derivative of ACT-toxin I, is highly toxic to pear and slightly toxic to citrus. On cellular level, ACT-toxins affect plasma membrane of susceptible cells and cause a sudden increase in loss of K(+) after a few minutes of toxin treatment. The acyl-CoA ligase ACTT1, the hydrolase ACTT2, the enoyl-CoA hydratases ACTT3 and ACTT6, and the acyl-CoA synthetase ACTT5 are all involved in the biosynthesis of the AK-, AF- and ACT-toxin common 9,10-epoxy-8-hydroxy-9-methyl-decatrienoic acid (EDA) structural moiety. The exact role of each enzyme, and of additional enzymes identified within the AF-toxin clusters have still to be determined. On the other hand, ACTTS1 to ACTTS4 are specific to the tangerine pathotype. The function of ACTTS3 is to elongate the polyketide chain portion of ACT-toxin that is unique to this toxin. The enoyl-reductase ACTTS2 might complement the missing enoyl-reductase (ER) domain in ACTTS3 in the synthesis of the polyketide portion of ACT-toxin. The roles of the nonribosomal peptide synthetases-related proteins ACTTS1 and ACTTS4 have also still not been elucidated. The polypeptide is Acyl-CoA synthetase ACTT5 (Alternaria alternata (Alternaria rot fungus)).